A 578-amino-acid chain; its full sequence is Vacuolar protein 8 (578 aa).

Glycine 2 carries the N-myristoyl glycine lipid modification. S-palmitoyl cysteine attachment occurs at residues cysteine 4, cysteine 5, and cysteine 7. Residues serine 11 and serine 16 each carry the phosphoserine modification. ARM repeat units lie at residues 37–75 (DKDQ…AEIT), 76–114 (EKYV…NLAV), 116–155 (NENK…NLAT), 157–196 (DDNK…NMTH), 198–237 (EENR…NIAV), 239–280 (EANR…NLAS), 282–321 (TSYQ…NISI), 323–363 (PLNE…NLAA), and 407–446 (DVSK…NLCS). Residue lysine 77 forms a Glycyl lysine isopeptide (Lys-Gly) (interchain with G-Cter in ubiquitin) linkage. Lysine 515 is covalently cross-linked (Glycyl lysine isopeptide (Lys-Gly) (interchain with G-Cter in ubiquitin)). Residues 527 to 557 (SGIDVKNPGSNNNPSSNDNNSNNNDTGSEHQ) form a disordered region. The segment covering 533–552 (NPGSNNNPSSNDNNSNNNDT) has biased composition (low complexity).

Belongs to the beta-catenin family. In terms of assembly, interacts with NVJ1. Forms heterotetramers of two VAC8 and two NVJ1 or two VAC8 and two ATG13. Post-translationally, palmitoylated on one or more of its N-terminal cysteine residues by PFA3, which is required for vacuole fusion.

It localises to the vacuole membrane. In terms of biological role, functions in both vacuole inheritance and protein targeting from the cytoplasm to vacuole (cvt). Involved in the formation of nucleus-vacuole junctions (NVJs) during piecemeal microautophagy of the nucleus (PMN). NVJs are interorganelle interfaces mediated by NVJ1 in the nuclear envelope and VAC8 on the vacuole membrane. Together, NVJ1 and VAC8 form Velcro-like patches through which teardrop-like portions of the nucleus are pinched off into the vacuolar lumen and degraded by the PMN process. The polypeptide is Vacuolar protein 8 (VAC8) (Saccharomyces cerevisiae (strain ATCC 204508 / S288c) (Baker's yeast)).